The sequence spans 577 residues: Nuclear fusion protein tht1 (577 aa).

An N-terminal signal peptide occupies residues 1-29 (MKFHPTRPFGLYFEFFIIISFFFTSESTG). The Lumenal segment spans residues 30–404 (DVESFMKYSN…MNVYFKGLSN (375 aa)). Residues N163 and N372 are each glycosylated (N-linked (GlcNAc...) asparagine). A helical transmembrane segment spans residues 405 to 425 (IISSFAFIGFTLFATLSSLFF). At 426-433 (KVLKIHRR) the chain is on the cytoplasmic side. A helical transmembrane segment spans residues 434–454 (PIIVFGSLSIIFIHIYCFKIT). Over 455–470 (SWVNLYGWITCTIART) the chain is Lumenal. A helical transmembrane segment spans residues 471 to 491 (LSFIKLNIRTFYLTAFLCALL). The Cytoplasmic portion of the chain corresponds to 492–577 (NFLRYLKYRN…ESLEQSPWWD (86 aa)).

The protein belongs to the KAR5 family. In terms of processing, N-glycosylated.

The protein localises to the endoplasmic reticulum membrane. The protein resides in the nucleus membrane. Required for nuclear membrane fusion during karyogamy. This chain is Nuclear fusion protein tht1 (tht1), found in Schizosaccharomyces pombe (strain 972 / ATCC 24843) (Fission yeast).